A 263-amino-acid chain; its full sequence is uncharacterized protein (263 aa).

Position 31–38 (31–38) interacts with ATP; it reads GPTGSGKT.

This sequence belongs to the CbbQ/NirQ/NorQ/GpvN family.

This is an uncharacterized protein from Staphylococcus haemolyticus (strain JCSC1435).